The primary structure comprises 667 residues: E3 ubiquitin-protein ligase Midline-1 (667 aa).

Residues 10-60 (CPICLELLEDPLLLPCAHSLCFNCAHRILVSHCATNEPVESINAFQCPTCR) form an RING-type zinc finger. Phosphoserine is present on residues serine 92 and serine 96. 2 B box-type zinc fingers span residues 116-165 (KVLC…IEPI) and 172-212 (GLMC…VAAL). Zn(2+)-binding residues include cysteine 119, cysteine 122, cysteine 134, cysteine 137, cysteine 142, cysteine 145, histidine 150, histidine 159, cysteine 175, histidine 178, cysteine 198, and histidine 204. A coiled-coil region spans residues 205 to 264 (RDHQVAALSERYDKLKQNLESNLTNLIKRNTELETLLAKLIQTCQHVEVNASRQEAKLTE). A COS domain is found at 320 to 379 (LKENDHARFLQTAKNITERVSMATASSQVLIPEINLNDTFDTFALDFSREKKLLECLDYL). Residues 381–484 (APNPPTIREE…EPGKLKTNSQ (104 aa)) form the Fibronectin type-III domain. A compositionally biased stretch (polar residues) spans 471–485 (SRSSEPGKLKTNSQP). The interval 471–524 (SRSSEPGKLKTNSQPFKLDPKSAHRKLKVSHDNLTVERDESSSKKSHTPERFTS) is disordered. Positions 482 to 659 (NSQPFKLDPK…IITGLPIPDH (178 aa)) constitute a B30.2/SPRY domain. Basic and acidic residues predominate over residues 499-520 (VSHDNLTVERDESSSKKSHTPE). A Phosphoserine modification is found at serine 511.

Belongs to the TRIM/RBCC family. Homodimer or heterodimer with MID2. Interacts with IGBP1.

It localises to the cytoplasm. It is found in the cytoskeleton. The catalysed reaction is S-ubiquitinyl-[E2 ubiquitin-conjugating enzyme]-L-cysteine + [acceptor protein]-L-lysine = [E2 ubiquitin-conjugating enzyme]-L-cysteine + N(6)-ubiquitinyl-[acceptor protein]-L-lysine.. Functionally, has E3 ubiquitin ligase activity towards IGBP1, promoting its monoubiquitination, which results in deprotection of the catalytic subunit of protein phosphatase PP2A, and its subsequent degradation by polyubiquitination. In Mus spretus (Western Mediterranean mouse), this protein is E3 ubiquitin-protein ligase Midline-1 (Mid1).